We begin with the raw amino-acid sequence, 147 residues long: Hemoglobin subunit epsilon (147 aa).

The region spanning 3–147 (HFTAEEKNAI…VANALAHKYH (145 aa)) is the Globin domain. Serine 51 is modified (phosphoserine). Histidine 64 and histidine 93 together coordinate heme b.

It belongs to the globin family. In terms of assembly, heterotetramer of two alpha chains and two epsilon chains in early embryonic hemoglobin Gower-2; two zeta chains and two epsilon chains in early embryonic hemoglobin Gower-1. As to expression, red blood cells.

Functionally, the epsilon chain is a beta-type chain of early mammalian embryonic hemoglobin. This Sminthopsis crassicaudata (Fat-tailed dunnart) protein is Hemoglobin subunit epsilon (HBE1).